We begin with the raw amino-acid sequence, 176 residues long: Large ribosomal subunit protein eL6 (176 aa).

The interval 1-27 is disordered; it reads MSQVAPKWYQSEDVPAPKQTRKTARPQ.

This sequence belongs to the eukaryotic ribosomal protein eL6 family. Component of the large ribosomal subunit. Mature ribosomes consist of a small (40S) and a large (60S) subunit. The 40S subunit contains about 32 different proteins and 1 molecule of RNA (18S). The 60S subunit contains 45 different proteins and 3 molecules of RNA (25S, 5.8S and 5S).

The protein localises to the cytoplasm. Its function is as follows. Component of the ribosome, a large ribonucleoprotein complex responsible for the synthesis of proteins in the cell. The small ribosomal subunit (SSU) binds messenger RNAs (mRNAs) and translates the encoded message by selecting cognate aminoacyl-transfer RNA (tRNA) molecules. The large subunit (LSU) contains the ribosomal catalytic site termed the peptidyl transferase center (PTC), which catalyzes the formation of peptide bonds, thereby polymerizing the amino acids delivered by tRNAs into a polypeptide chain. The nascent polypeptides leave the ribosome through a tunnel in the LSU and interact with protein factors that function in enzymatic processing, targeting, and the membrane insertion of nascent chains at the exit of the ribosomal tunnel. This is Large ribosomal subunit protein eL6 from Candida albicans (strain SC5314 / ATCC MYA-2876) (Yeast).